The following is an 83-amino-acid chain: Alpha-neurotoxin NTX-1 (83 aa).

The first 21 residues, 1-21 (MKTLLLTLLVVTIVCLDLGYT), serve as a signal peptide directing secretion. Cystine bridges form between C24–C45, C38–C62, C64–C75, and C76–C81.

The protein belongs to the three-finger toxin family. Short-chain subfamily. Type I alpha-neurotoxin sub-subfamily. Expressed by the venom gland.

It is found in the secreted. Functionally, binds to muscle nicotinic acetylcholine receptor (nAChR) and inhibit acetylcholine from binding to the receptor, thereby impairing neuromuscular transmission. The polypeptide is Alpha-neurotoxin NTX-1 (Naja sputatrix (Malayan spitting cobra)).